The chain runs to 164 residues: Bacterial microcompartment shell protein EutK (164 aa).

The 85-residue stretch at 4 to 88 folds into the BMC domain; the sequence is ALGLLEVDGM…PEEDTQWLIG (85 aa). In terms of domain architecture, EutK-Ctail spans 108–164; that stretch reads EFAEALLALLASVRQGMTAGEVAAHFGWPLEQARNVLEQLFSDGALRKRSSRYRIKN.

It belongs to the bacterial microcompartments protein family. In terms of assembly, monomeric in solution.

The protein localises to the bacterial microcompartment. It functions in the pathway amine and polyamine degradation; ethanolamine degradation. A component of the bacterial microcompartment (BMC) shell dedicated to ethanolamine degradation. Expression of eutK, eutL, eutM, eutN, eutS (eutSMNLK) in E.coli leads to formation of a single BMC. Coexpression of eutQ with eutSMNLK permits E.coli to make cells with more than one mobile BMC, as is usual in vivo. Functionally, the ethanolamine (EA) catabolic bacterial microcompartment (BMC) probably concentrates low levels of ethanolamine catabolic enzymes, concentrates volatile reaction intermediates, keeps the level of toxic acetaldehyde low, generates enough acetyl-CoA to support cell growth, and maintains a pool of free coenzyme A (CoA) and NAD. Deletion of BMC genes (eutK, eutL, eutM) restores growth of eutD deletions, suggesting there are dedicated pools of coenzyme A (CoA) and NAD in the BMC. In terms of biological role, expression of the eut operon allows this bacteria to use ethanolamine as a carbon, nitrogen and energy source. It relies on cobalamin (vitamin B12) both as a cofactor for the ethanolamine ammonia-lyase (EAL) activity and to induce the operon. EA enhances bacterial survival in macrophages in a concentration-dependent manner, suggesting it is an important nutrient during infection. This chain is Bacterial microcompartment shell protein EutK (eutK), found in Salmonella typhimurium (strain LT2 / SGSC1412 / ATCC 700720).